A 465-amino-acid chain; its full sequence is Putative F-box protein At1g21990 (465 aa).

An F-box domain is found at 8-54 (RDLISGSPDEILGKILSFLPTHHAATTSVLSKRWRNLLPLVDKLELT).

The polypeptide is Putative F-box protein At1g21990 (Arabidopsis thaliana (Mouse-ear cress)).